Here is a 93-residue protein sequence, read N- to C-terminus: Protein BOLA2 (93 aa).

C29 is modified (S-glutathionyl cysteine; transient; alternate). The interval K72–A93 is disordered.

It belongs to the bolA/yrbA family. As to quaternary structure, homodimer. Interacts in vitro with GRXS14, GRXS15, GRXS16 and GRXS17, but not with GRXC5. Interacts in vivo only with GRXS17. In terms of processing, can be either glutathionylated or forming covalent homodimers, depending on the oxidation state.

The protein localises to the cytoplasm. The protein resides in the nucleus. Functionally, may act either alone or in interaction with glutaredoxin as a redox-regulated transcriptional regulator, or as a factor regulating Fe-S cluster biogenesis. The GRXS17-BOLA2 heterodimer binds a labile, oxygen sensitive iron-sulfur cluster. This chain is Protein BOLA2, found in Arabidopsis thaliana (Mouse-ear cress).